The chain runs to 160 residues: 6,7-dimethyl-8-ribityllumazine synthase (160 aa).

Residues Trp-28, 59–61 (SFE), and 82–84 (VII) each bind 5-amino-6-(D-ribitylamino)uracil. Residue 87–88 (GT) participates in (2S)-2-hydroxy-3-oxobutyl phosphate binding. The active-site Proton donor is the His-90. Phe-115 is a binding site for 5-amino-6-(D-ribitylamino)uracil. Arg-129 serves as a coordination point for (2S)-2-hydroxy-3-oxobutyl phosphate.

This sequence belongs to the DMRL synthase family.

It carries out the reaction (2S)-2-hydroxy-3-oxobutyl phosphate + 5-amino-6-(D-ribitylamino)uracil = 6,7-dimethyl-8-(1-D-ribityl)lumazine + phosphate + 2 H2O + H(+). The protein operates within cofactor biosynthesis; riboflavin biosynthesis; riboflavin from 2-hydroxy-3-oxobutyl phosphate and 5-amino-6-(D-ribitylamino)uracil: step 1/2. Its function is as follows. Catalyzes the formation of 6,7-dimethyl-8-ribityllumazine by condensation of 5-amino-6-(D-ribitylamino)uracil with 3,4-dihydroxy-2-butanone 4-phosphate. This is the penultimate step in the biosynthesis of riboflavin. The sequence is that of 6,7-dimethyl-8-ribityllumazine synthase from Clavibacter michiganensis subsp. michiganensis (strain NCPPB 382).